Reading from the N-terminus, the 229-residue chain is Orotidine 5'-phosphate decarboxylase (229 aa).

Substrate contacts are provided by residues Asp-9, Lys-31, 58–67, Thr-121, Arg-179, Gln-188, Gly-208, and Arg-209; that span reads DLKLFDIPNT. The active-site Proton donor is the Lys-60.

This sequence belongs to the OMP decarboxylase family. Type 1 subfamily. In terms of assembly, homodimer.

The enzyme catalyses orotidine 5'-phosphate + H(+) = UMP + CO2. The protein operates within pyrimidine metabolism; UMP biosynthesis via de novo pathway; UMP from orotate: step 2/2. Catalyzes the decarboxylation of orotidine 5'-monophosphate (OMP) to uridine 5'-monophosphate (UMP). In Lawsonia intracellularis (strain PHE/MN1-00), this protein is Orotidine 5'-phosphate decarboxylase.